Consider the following 397-residue polypeptide: Tryptophan synthase beta chain (397 aa).

Residue Lys87 is modified to N6-(pyridoxal phosphate)lysine.

It belongs to the TrpB family. In terms of assembly, tetramer of two alpha and two beta chains. The cofactor is pyridoxal 5'-phosphate.

The catalysed reaction is (1S,2R)-1-C-(indol-3-yl)glycerol 3-phosphate + L-serine = D-glyceraldehyde 3-phosphate + L-tryptophan + H2O. Its pathway is amino-acid biosynthesis; L-tryptophan biosynthesis; L-tryptophan from chorismate: step 5/5. In terms of biological role, the beta subunit is responsible for the synthesis of L-tryptophan from indole and L-serine. In Salmonella agona (strain SL483), this protein is Tryptophan synthase beta chain.